Reading from the N-terminus, the 993-residue chain is Glycogen phosphorylase 2 (993 aa).

The interval 1–82 (MEEKRSTNSP…SNQSEDPATQ (82 aa)) is disordered. Residues 19–48 (RSGSITSATSHPPRSNSNPKLVAKHQQQLY) are compositionally biased toward polar residues. A compositionally biased stretch (low complexity) spans 58 to 77 (EQQNQQPQQQQQKQTSNQSE). An N6-(pyridoxal phosphate)lysine modification is found at lysine 763. Residues 962 to 981 (VISGGDKTNNTLKPKQTTKG) show a composition bias toward polar residues. Positions 962–993 (VISGGDKTNNTLKPKQTTKGFNIGGQPGNPTN) are disordered. Positions 983-993 (NIGGQPGNPTN) are enriched in gly residues.

It belongs to the glycogen phosphorylase family. Homodimer. Pyridoxal 5'-phosphate is required as a cofactor. In terms of processing, the N-terminus is blocked. Post-translationally, enzyme activity requires processing of the 113 kDa peptide to an enzymatically active 106 kDa form of the protein. Processing would occur near the middle of the Gln-rich repetitive element.

It carries out the reaction [(1-&gt;4)-alpha-D-glucosyl](n) + phosphate = [(1-&gt;4)-alpha-D-glucosyl](n-1) + alpha-D-glucose 1-phosphate. In terms of biological role, phosphorylase is an important allosteric enzyme in carbohydrate metabolism. Enzymes from different sources differ in their regulatory mechanisms and in their natural substrates. However, all known phosphorylases share catalytic and structural properties. This chain is Glycogen phosphorylase 2 (glpD), found in Dictyostelium discoideum (Social amoeba).